Here is a 703-residue protein sequence, read N- to C-terminus: Protein STRUBBELIG-RECEPTOR FAMILY 8 (703 aa).

Residues 1-27 (MAIGDRAMFTVLLLFIASISGFSVVRC) form the signal peptide. Over 28-291 (VTDPSDVQAL…GKGLSGGVVT (264 aa)) the chain is Extracellular. LRR repeat units lie at residues 96–120 (LKSL…LPPN), 122–142 (TSLN…ISAM), 143–165 (GSLS…IFAD), 166–190 (HKSL…LSTV), 192–212 (TLSV…VLSG), 213–233 (LPLK…PKEL), and 234–256 (SSIQ…PQPE). 4 N-linked (GlcNAc...) asparagine glycosylation sites follow: Asn-120, Asn-130, Asn-149, and Asn-178. Asn-226 carries N-linked (GlcNAc...) asparagine glycosylation. Residues 247–284 (DNVPASPQPERPGKKETPSGSKKPKIGSEEKSSDSGKG) form a disordered region. Residues 292-312 (GIVFGSLFVAGIIALVLYLCL) traverse the membrane as a helical segment. Residues 313–703 (HKKKRKVRGS…PEHEHVDISF (391 aa)) lie on the Cytoplasmic side of the membrane. The 278-residue stretch at 395-672 (FSQENIIGEG…SEVVQQLVRL (278 aa)) folds into the Protein kinase domain. ATP contacts are provided by residues 401–409 (IGEGSLGRV) and Lys-423.

It belongs to the protein kinase superfamily. Ser/Thr protein kinase family. As to expression, expressed in seedlings, roots, stems, leaves, flowers and siliques.

Its subcellular location is the membrane. This Arabidopsis thaliana (Mouse-ear cress) protein is Protein STRUBBELIG-RECEPTOR FAMILY 8 (SRF8).